Here is a 270-residue protein sequence, read N- to C-terminus: NAD kinase (270 aa).

Aspartate 49 functions as the Proton acceptor in the catalytic mechanism. NAD(+) is bound by residues aspartate 49–glycine 50, arginine 54, asparagine 126–glutamate 127, arginine 152, aspartate 154, threonine 165–serine 170, alanine 189, and glutamine 227.

This sequence belongs to the NAD kinase family. The cofactor is a divalent metal cation.

The protein resides in the cytoplasm. It carries out the reaction NAD(+) + ATP = ADP + NADP(+) + H(+). Its function is as follows. Involved in the regulation of the intracellular balance of NAD and NADP, and is a key enzyme in the biosynthesis of NADP. Catalyzes specifically the phosphorylation on 2'-hydroxyl of the adenosine moiety of NAD to yield NADP. This is NAD kinase from Lactococcus lactis subsp. lactis (strain IL1403) (Streptococcus lactis).